Here is a 457-residue protein sequence, read N- to C-terminus: Multidrug resistance protein MdtK (457 aa).

12 helical membrane passes run 11–31, 53–73, 93–113, 127–147, 160–180, 191–211, 243–263, 276–296, 316–336, 357–377, 387–407, and 418–438; these read LLAL…MGFV, IWLP…PVVA, WLAG…GYII, AVGY…FQVA, GMVM…IFIY, VGCG…MLWW, LPIA…ALLV, IALN…AAVT, RTGV…TVLM, LMLL…GSGI, IFFI…YLLA, and PAGF…MMML.

Belongs to the multi antimicrobial extrusion (MATE) (TC 2.A.66.1) family. MdtK subfamily.

The protein resides in the cell inner membrane. In terms of biological role, multidrug efflux pump that functions probably as a Na(+)/drug antiporter. The sequence is that of Multidrug resistance protein MdtK from Klebsiella pneumoniae subsp. pneumoniae (strain ATCC 700721 / MGH 78578).